A 163-amino-acid polypeptide reads, in one-letter code: MDLKQIEKLMIAMGRNKMKRIAIKRDGFELELERDTGPNIQEPVFYDNRLFAGFTQERPIPSDQNLGNPIVKEVGEKKEDKPVEGDFIVSPLVGTFYGAPSPESPAFVKPGDIVSEDTVVCIVEAMKVMNEVKAGMAGRVEEVLITNGDPVQFGSKLFRIVKA.

Positions 85–161 (GDFIVSPLVG…QFGSKLFRIV (77 aa)) constitute a Biotinyl-binding domain. K127 is modified (N6-biotinyllysine).

In terms of assembly, homodimer.

The protein operates within lipid metabolism; fatty acid biosynthesis. Its function is as follows. This protein is a component of the acetyl coenzyme A carboxylase complex; first, biotin carboxylase catalyzes the carboxylation of the carrier protein and then the transcarboxylase transfers the carboxyl group to form malonyl-CoA. This chain is Biotin carboxyl carrier protein of acetyl-CoA carboxylase (accB), found in Chlamydia muridarum (strain MoPn / Nigg).